A 715-amino-acid polypeptide reads, in one-letter code: Fatty acid oxidation complex subunit alpha (715 aa).

Residues 1–190 form an enoyl-CoA hydratase region; it reads MTTTSAFMLN…RAGLVDDVVP (190 aa). Positions 306–715 are 3-hydroxyacyl-CoA dehydrogenase; the sequence is GPLNSVGILG…WTNGETDQGN (410 aa).

This sequence in the N-terminal section; belongs to the enoyl-CoA hydratase/isomerase family. It in the central section; belongs to the 3-hydroxyacyl-CoA dehydrogenase family. As to quaternary structure, heterotetramer of two alpha chains (FadJ) and two beta chains (FadI).

Its subcellular location is the cytoplasm. It carries out the reaction a (3S)-3-hydroxyacyl-CoA = a (2E)-enoyl-CoA + H2O. It catalyses the reaction a 4-saturated-(3S)-3-hydroxyacyl-CoA = a (3E)-enoyl-CoA + H2O. The catalysed reaction is a (3S)-3-hydroxyacyl-CoA + NAD(+) = a 3-oxoacyl-CoA + NADH + H(+). The enzyme catalyses (3S)-3-hydroxybutanoyl-CoA = (3R)-3-hydroxybutanoyl-CoA. It functions in the pathway lipid metabolism; fatty acid beta-oxidation. In terms of biological role, catalyzes the formation of a hydroxyacyl-CoA by addition of water on enoyl-CoA. Also exhibits 3-hydroxyacyl-CoA epimerase and 3-hydroxyacyl-CoA dehydrogenase activities. The sequence is that of Fatty acid oxidation complex subunit alpha from Salmonella schwarzengrund (strain CVM19633).